The chain runs to 82 residues: Small ribosomal subunit protein bS16 (82 aa).

This sequence belongs to the bacterial ribosomal protein bS16 family.

The chain is Small ribosomal subunit protein bS16 from Deinococcus geothermalis (strain DSM 11300 / CIP 105573 / AG-3a).